A 428-amino-acid chain; its full sequence is Lipoamide acyltransferase component of branched-chain alpha-keto acid dehydrogenase complex (428 aa).

The Lipoyl-binding domain occupies 3–78 (THVIKMPDIG…AVGGELIRLE (76 aa)). Position 44 is an N6-lipoyllysine (Lys-44). The interval 88–145 (SPAAATPAAPVAATPEKPKEAPVAAPKAAAEAPRALRDSEAPRQRRQPGERPLASPAV) is disordered. The segment covering 89–120 (PAAATPAAPVAATPEKPKEAPVAAPKAAAEAP) has biased composition (low complexity). Residues 121 to 136 (RALRDSEAPRQRRQPG) show a composition bias toward basic and acidic residues. A Peripheral subunit-binding (PSBD) domain is found at 140–177 (LASPAVRQRARDLGIELQFVQGSGPAGRVLHEDLDAYL). Residues His-400 and Asp-404 contribute to the active site.

This sequence belongs to the 2-oxoacid dehydrogenase family. As to quaternary structure, forms a 24-polypeptide structural core with octahedral symmetry. It depends on (R)-lipoate as a cofactor.

It catalyses the reaction N(6)-[(R)-dihydrolipoyl]-L-lysyl-[protein] + 2-methylpropanoyl-CoA = N(6)-[(R)-S(8)-2-methylpropanoyldihydrolipoyl]-L-lysyl-[protein] + CoA. The branched-chain alpha-keto dehydrogenase complex catalyzes the overall conversion of alpha-keto acids to acyl-CoA and CO(2). It contains multiple copies of three enzymatic components: branched-chain alpha-keto acid decarboxylase (E1), lipoamide acyltransferase (E2) and lipoamide dehydrogenase (E3). The chain is Lipoamide acyltransferase component of branched-chain alpha-keto acid dehydrogenase complex (bkdB) from Pseudomonas aeruginosa (strain ATCC 15692 / DSM 22644 / CIP 104116 / JCM 14847 / LMG 12228 / 1C / PRS 101 / PAO1).